Reading from the N-terminus, the 355-residue chain is N-acylethanolamine-hydrolyzing acid amidase (355 aa).

An N-terminal signal peptide occupies residues 1-17 (MLLLQIILLLLPVICSA). Cys-122 acts as the Nucleophile in catalysis. N-linked (GlcNAc...) asparagine glycans are attached at residues Asn-150, Asn-160, and Asn-328.

This sequence belongs to the acid ceramidase family. In terms of assembly, heterodimer of an alpha and a beta subunit, produced by autocatalytic cleavage. Post-translationally, N-glycosylated. Autoproteolytic cleavage at pH 4.5 gives rise to the alpha and beta subunit. Cleavage gives rise to a conformation change that activates the enzyme. The same catalytic Cys residue mediates the autoproteolytic cleavage and subsequent hydrolysis of lipid substrates.

Its subcellular location is the lysosome. The protein resides in the membrane. It catalyses the reaction N-hexadecanoylethanolamine + H2O = ethanolamine + hexadecanoate. The enzyme catalyses an N-(long-chain fatty acyl)ethanolamine + H2O = a long-chain fatty acid + ethanolamine. It functions in the pathway lipid metabolism; fatty acid metabolism. Functionally, degrades bioactive fatty acid amides, such as N-palmitoylethanolamine, to ethanolamine and free fatty acids. This is N-acylethanolamine-hydrolyzing acid amidase from Caenorhabditis elegans.